The sequence spans 331 residues: Anthranilate phosphoribosyltransferase (331 aa).

Residues Gly-78, 81–82 (GD), Thr-86, 88–91 (NVST), 106–114 (KHGNYSVSS), and Ser-118 each bind 5-phospho-alpha-D-ribose 1-diphosphate. Gly-78 lines the anthranilate pocket. Ser-90 contacts Mg(2+). Asn-109 lines the anthranilate pocket. Arg-164 contacts anthranilate. Residues Asp-222 and Glu-223 each contribute to the Mg(2+) site.

It belongs to the anthranilate phosphoribosyltransferase family. Homodimer. The cofactor is Mg(2+).

The catalysed reaction is N-(5-phospho-beta-D-ribosyl)anthranilate + diphosphate = 5-phospho-alpha-D-ribose 1-diphosphate + anthranilate. It participates in amino-acid biosynthesis; L-tryptophan biosynthesis; L-tryptophan from chorismate: step 2/5. Its function is as follows. Catalyzes the transfer of the phosphoribosyl group of 5-phosphorylribose-1-pyrophosphate (PRPP) to anthranilate to yield N-(5'-phosphoribosyl)-anthranilate (PRA). The polypeptide is Anthranilate phosphoribosyltransferase (Haloferax volcanii (strain ATCC 29605 / DSM 3757 / JCM 8879 / NBRC 14742 / NCIMB 2012 / VKM B-1768 / DS2) (Halobacterium volcanii)).